We begin with the raw amino-acid sequence, 893 residues long: Exocyst complex component 4 (893 aa).

The disordered stretch occupies residues 1–27; sequence MNENGATPVAAARRHRPLPAERATSNS.

This sequence belongs to the SEC8 family. As to quaternary structure, the exocyst complex is composed of sec-3/exoc1, sec-5/exoc2, sec-6/exoc3, sec-8/exoc4, sec-10/exoc5, sec-15/exoc6, exo-70/exoc7 and exo-84/exoc8. In terms of tissue distribution, pseudocoelom.

Its function is as follows. Component of the exocyst complex involved in the docking of exocytic vesicles with fusion sites on the plasma membrane. This is Exocyst complex component 4 (sec-8) from Caenorhabditis elegans.